A 425-amino-acid chain; its full sequence is Serine--tRNA ligase (425 aa).

232–234 contacts L-serine; that stretch reads TSE. Residues 263–265 and Val-279 each bind ATP; that span reads RRE. Glu-286 provides a ligand contact to L-serine. 350–353 provides a ligand contact to ATP; it reads EVVS. Thr-387 is a binding site for L-serine.

The protein belongs to the class-II aminoacyl-tRNA synthetase family. Type-1 seryl-tRNA synthetase subfamily. As to quaternary structure, homodimer. The tRNA molecule binds across the dimer.

Its subcellular location is the cytoplasm. The catalysed reaction is tRNA(Ser) + L-serine + ATP = L-seryl-tRNA(Ser) + AMP + diphosphate + H(+). The enzyme catalyses tRNA(Sec) + L-serine + ATP = L-seryl-tRNA(Sec) + AMP + diphosphate + H(+). The protein operates within aminoacyl-tRNA biosynthesis; selenocysteinyl-tRNA(Sec) biosynthesis; L-seryl-tRNA(Sec) from L-serine and tRNA(Sec): step 1/1. Functionally, catalyzes the attachment of serine to tRNA(Ser). Is also able to aminoacylate tRNA(Sec) with serine, to form the misacylated tRNA L-seryl-tRNA(Sec), which will be further converted into selenocysteinyl-tRNA(Sec). The sequence is that of Serine--tRNA ligase from Methanocella arvoryzae (strain DSM 22066 / NBRC 105507 / MRE50).